The following is a 420-amino-acid chain: Phosphoribosylamine--glycine ligase (420 aa).

In terms of domain architecture, ATP-grasp spans 108 to 314 (KQIMVKYGIP…FAQNIDDILH (207 aa)). 134–195 (IEEQGAPIVV…EEFLAGEEFS (62 aa)) provides a ligand contact to ATP. The Mg(2+) site is built by Glu-284 and Asn-286.

The protein belongs to the GARS family. Mg(2+) serves as cofactor. It depends on Mn(2+) as a cofactor.

The catalysed reaction is 5-phospho-beta-D-ribosylamine + glycine + ATP = N(1)-(5-phospho-beta-D-ribosyl)glycinamide + ADP + phosphate + H(+). The protein operates within purine metabolism; IMP biosynthesis via de novo pathway; N(1)-(5-phospho-D-ribosyl)glycinamide from 5-phospho-alpha-D-ribose 1-diphosphate: step 2/2. The polypeptide is Phosphoribosylamine--glycine ligase (Streptococcus suis).